Reading from the N-terminus, the 216-residue chain is Imidazole glycerol phosphate synthase subunit HisH 1 (216 aa).

One can recognise a Glutamine amidotransferase type-1 domain in the interval 4–216 (CVLIVDAGLG…LQNFIALNPC (213 aa)). Cysteine 84 (nucleophile) is an active-site residue. Residues histidine 195 and glutamate 197 contribute to the active site.

In terms of assembly, heterodimer of HisH and HisF.

It is found in the cytoplasm. The catalysed reaction is 5-[(5-phospho-1-deoxy-D-ribulos-1-ylimino)methylamino]-1-(5-phospho-beta-D-ribosyl)imidazole-4-carboxamide + L-glutamine = D-erythro-1-(imidazol-4-yl)glycerol 3-phosphate + 5-amino-1-(5-phospho-beta-D-ribosyl)imidazole-4-carboxamide + L-glutamate + H(+). It carries out the reaction L-glutamine + H2O = L-glutamate + NH4(+). It participates in amino-acid biosynthesis; L-histidine biosynthesis; L-histidine from 5-phospho-alpha-D-ribose 1-diphosphate: step 5/9. Functionally, IGPS catalyzes the conversion of PRFAR and glutamine to IGP, AICAR and glutamate. The HisH subunit provides the glutamine amidotransferase activity that produces the ammonia necessary to HisF for the synthesis of IGP and AICAR. The protein is Imidazole glycerol phosphate synthase subunit HisH 1 (hisH1) of Prochlorococcus marinus (strain MIT 9313).